The primary structure comprises 338 residues: Glutamyl-tRNA reductase (338 aa).

Substrate is bound by residues 50–53 (TCHR), Ser-102, 107–109 (ETE), and Gln-113. Cys-51 serves as the catalytic Nucleophile. Residue 181-186 (GYSEIN) coordinates NADP(+).

This sequence belongs to the glutamyl-tRNA reductase family. As to quaternary structure, homodimer.

It catalyses the reaction (S)-4-amino-5-oxopentanoate + tRNA(Glu) + NADP(+) = L-glutamyl-tRNA(Glu) + NADPH + H(+). The protein operates within porphyrin-containing compound metabolism; protoporphyrin-IX biosynthesis; 5-aminolevulinate from L-glutamyl-tRNA(Glu): step 1/2. Catalyzes the NADPH-dependent reduction of glutamyl-tRNA(Glu) to glutamate 1-semialdehyde (GSA). The protein is Glutamyl-tRNA reductase of Chlamydia abortus (strain DSM 27085 / S26/3) (Chlamydophila abortus).